Consider the following 230-residue polypeptide: Large ribosomal subunit protein uL1 (230 aa).

The protein belongs to the universal ribosomal protein uL1 family. As to quaternary structure, part of the 50S ribosomal subunit.

In terms of biological role, binds directly to 23S rRNA. The L1 stalk is quite mobile in the ribosome, and is involved in E site tRNA release. Functionally, protein L1 is also a translational repressor protein, it controls the translation of the L11 operon by binding to its mRNA. The sequence is that of Large ribosomal subunit protein uL1 from Bacillus mycoides (strain KBAB4) (Bacillus weihenstephanensis).